We begin with the raw amino-acid sequence, 303 residues long: Oxygen-dependent coproporphyrinogen-III oxidase (303 aa).

Serine 93 is a binding site for substrate. Residues histidine 97 and histidine 107 each coordinate a divalent metal cation. The Proton donor role is filled by histidine 107. 109-111 (NVR) lines the substrate pocket. A divalent metal cation contacts are provided by histidine 146 and histidine 176. Residues 241–276 (YVEFNLVYDRGTLFGLQSGGRTESILMSLPPQVRWG) form an important for dimerization region. 259–261 (GGR) is a substrate binding site.

The protein belongs to the aerobic coproporphyrinogen-III oxidase family. Homodimer. The cofactor is a divalent metal cation.

It is found in the cytoplasm. It carries out the reaction coproporphyrinogen III + O2 + 2 H(+) = protoporphyrinogen IX + 2 CO2 + 2 H2O. It participates in porphyrin-containing compound metabolism; protoporphyrin-IX biosynthesis; protoporphyrinogen-IX from coproporphyrinogen-III (O2 route): step 1/1. Its function is as follows. Involved in the heme biosynthesis. Catalyzes the aerobic oxidative decarboxylation of propionate groups of rings A and B of coproporphyrinogen-III to yield the vinyl groups in protoporphyrinogen-IX. The sequence is that of Oxygen-dependent coproporphyrinogen-III oxidase from Pseudomonas putida (strain ATCC 700007 / DSM 6899 / JCM 31910 / BCRC 17059 / LMG 24140 / F1).